Consider the following 199-residue polypeptide: Casparian strip membrane protein 2 (199 aa).

Residues 1–37 are Cytoplasmic-facing; sequence MMRGSTEIDMPESSSVSKGTAPLIAAPMKEKGGYKKG. The chain crosses the membrane as a helical span at residues 38 to 58; that stretch reads IAIFDFILRLAAIATALAAAA. Topologically, residues 59–87 are extracellular; sequence SMGTSDETLPFFTQFFQFQASYDDLPTFQ. Residues 88 to 108 form a helical membrane-spanning segment; sequence FFVIAMAIVAGYLVLSLPFSI. The Cytoplasmic segment spans residues 109–120; that stretch reads VAIVRPHAAGPR. The chain crosses the membrane as a helical span at residues 121-141; the sequence is LLLIILDTVALTLNTAAGAAA. Residues 142-173 lie on the Extracellular side of the membrane; sequence AAIVYLAHNGNSSTNWLAICQQFGDFCQKNSG. Residue asparagine 152 is glycosylated (N-linked (GlcNAc...) asparagine). A helical membrane pass occupies residues 174–194; that stretch reads AVVASFITVVIFVFLLVLSAF. Residues 195–199 are Cytoplasmic-facing; the sequence is ALRRH.

It belongs to the Casparian strip membrane proteins (CASP) family. Homodimer and heterodimers.

The protein resides in the cell membrane. Functionally, regulates membrane-cell wall junctions and localized cell wall deposition. Required for establishment of the Casparian strip membrane domain (CSD) and the subsequent formation of Casparian strips, a cell wall modification of the root endodermis that determines an apoplastic barrier between the intraorganismal apoplasm and the extraorganismal apoplasm and prevents lateral diffusion. This chain is Casparian strip membrane protein 2, found in Populus trichocarpa (Western balsam poplar).